The chain runs to 401 residues: Chorismate synthase (401 aa).

R40 and R46 together coordinate NADP(+). Residues 135–137, 256–257, G302, 317–321, and R343 each bind FMN; these read RAS, QA, and KPISS.

The protein belongs to the chorismate synthase family. Homotetramer. The cofactor is FMNH2.

It carries out the reaction 5-O-(1-carboxyvinyl)-3-phosphoshikimate = chorismate + phosphate. It functions in the pathway metabolic intermediate biosynthesis; chorismate biosynthesis; chorismate from D-erythrose 4-phosphate and phosphoenolpyruvate: step 7/7. Catalyzes the anti-1,4-elimination of the C-3 phosphate and the C-6 proR hydrogen from 5-enolpyruvylshikimate-3-phosphate (EPSP) to yield chorismate, which is the branch point compound that serves as the starting substrate for the three terminal pathways of aromatic amino acid biosynthesis. This reaction introduces a second double bond into the aromatic ring system. The protein is Chorismate synthase of Saccharopolyspora erythraea (strain ATCC 11635 / DSM 40517 / JCM 4748 / NBRC 13426 / NCIMB 8594 / NRRL 2338).